The chain runs to 954 residues: MTEAAAPASDIPPFRYTADLADEIERRWQDTWEREGTFHAPNPTGPLADPEHPRAGAEKLYVLDMFPYPSGAGLHVGHPLGYIGTDCFARYQRMAGRNVLHAMGFDAFGLPAEQYAVQTGTHPRTTTEANIARYKAQLRRLGLAHDERRSVATIDADFYRWTQWVFLQIYNAWYDSSAKRARPIAELVAEFSGGSRRTPDGRPWGELTDAERRAVVDQHRLAYVSQAPVNWCPGLGTVLANEEVTADGRSERGNFPVFKRNLKQWMMRITAYGDRLLDDLEKLDWPEPIKLMQRNWIGRSTGAHIEFPTSAPDSDAEGEPRISVFTTRPDTIFGATYLVLAPEHDLVDTLVPTAWPAGVPQAWTGGQASPREAVAGYRKVAAAKTDLERQAETKEKTGVFIGSYATNPVTGAQIPIFIADYVLAGYGTGAIMAVPGQDERDWAFAEVFDLPIVRTVQPAEGFAGKAYTGDGLAINSATPERGLDLNGLGVAEAKARTIAWLEAGGHGSGAVTYRLRDWLFSRQRYWGEPFPIVYDETGAAIALPEELLPVELPEVDDFAPRTFDPSDAESNPETPLSRRRDWVEVELDLGDGPKRYTRETNVMPQWAGSCWYELRYLDPTNGDRFVDPEAERYWMGPRGEGDCGGTDLYVGGAEHAVLHLLYARFWHKVLYDLGHVSSFEPFRKLFNQGYIQAYAYTDARGAYVPAEEVVERSGTYYLGDVQVNREYGKMGKSLRNVVTPDEMCAAYGADTFRVYEMSMGPLEVSRPWETRAVVGSFRFLQRVWRAIVDERSGASRVVDVPADEATRRLLHRIVDGVRGDMEAMRFNTTIAKLIELTNALTRLPETPREVAEPLVLMLAPFAPHVAEELWRRMGHETSLTYADFPVADPALLVAESVTYPVQVNGKVRGRIEVPADAGQETVRAAALEAVAASLAGKEPRKVIVVPGRMVSVVA.

The 'HIGH' region signature appears at 67-78 (PYPSGAGLHVGH). The short motif at 729 to 733 (KMGKS) is the 'KMSKS' region element. ATP is bound at residue K732.

The protein belongs to the class-I aminoacyl-tRNA synthetase family.

Its subcellular location is the cytoplasm. The enzyme catalyses tRNA(Leu) + L-leucine + ATP = L-leucyl-tRNA(Leu) + AMP + diphosphate. This Salinispora tropica (strain ATCC BAA-916 / DSM 44818 / JCM 13857 / NBRC 105044 / CNB-440) protein is Leucine--tRNA ligase.